The following is a 389-amino-acid chain: Type II methyltransferase M1.ScrFI (389 aa).

The region spanning 16 to 71 is the HTH cro/C1-type domain; the sequence is IKEKRLRLNMTQKELADAVGMSKNGDRTIRRWENGETCPSQLEISAILRFPEIAPF. The 309-residue stretch at 79 to 387 folds into the SAM-dependent MTase C5-type domain; the sequence is YKMIDLFAGI…EKMLEVLEKS (309 aa). Residue Cys149 is part of the active site.

The protein belongs to the class I-like SAM-binding methyltransferase superfamily. C5-methyltransferase family.

The catalysed reaction is a 2'-deoxycytidine in DNA + S-adenosyl-L-methionine = a 5-methyl-2'-deoxycytidine in DNA + S-adenosyl-L-homocysteine + H(+). A methylase, recognizes the double-stranded sequence 5'-CCNGG-3', methylates C-2 on both strands, and protects the DNA from cleavage by the ScrFI endonuclease. The protein is Type II methyltransferase M1.ScrFI (scrFIAM) of Lactococcus lactis subsp. cremoris (Streptococcus cremoris).